Here is a 244-residue protein sequence, read N- to C-terminus: Ribosomal RNA large subunit methyltransferase E (244 aa).

Residues 1 to 23 are disordered; sequence MATGGKKSAGRTTGSGPAGGSRN. 5 residues coordinate S-adenosyl-L-methionine: Gly91, Trp93, Asp116, Asp132, and Asp156. Lys196 serves as the catalytic Proton acceptor.

Belongs to the class I-like SAM-binding methyltransferase superfamily. RNA methyltransferase RlmE family.

It localises to the cytoplasm. It catalyses the reaction uridine(2552) in 23S rRNA + S-adenosyl-L-methionine = 2'-O-methyluridine(2552) in 23S rRNA + S-adenosyl-L-homocysteine + H(+). In terms of biological role, specifically methylates the uridine in position 2552 of 23S rRNA at the 2'-O position of the ribose in the fully assembled 50S ribosomal subunit. The chain is Ribosomal RNA large subunit methyltransferase E from Paramagnetospirillum magneticum (strain ATCC 700264 / AMB-1) (Magnetospirillum magneticum).